The chain runs to 82 residues: Chlorosome protein E (82 aa).

His-26 contacts a bacteriochlorophyll c. Residues 55 to 82 (GSSGLKGSSPKYSGYATPSKEVKSRFEK) form a disordered region. A compositionally biased stretch (low complexity) spans 59–69 (LKGSSPKYSGY).

Belongs to the BChl C/E-binding protein family.

It localises to the chlorosome. The protein resides in the chlorosome envelope. Functionally, component of the photosynthetic apparatus. The light harvesting B740 complex binds bacteriochlorophyll c. This Chlorobaculum tepidum (strain ATCC 49652 / DSM 12025 / NBRC 103806 / TLS) (Chlorobium tepidum) protein is Chlorosome protein E (csmE).